A 254-amino-acid chain; its full sequence is Photosystem II 22 kDa protein 2, chloroplastic (254 aa).

The N-terminal 38 residues, 1–38, are a transit peptide targeting the chloroplast; it reads MALQQSMAMPMMVVSGLGTAPRSSPMVQLQRMKKHLVV. 2 repeat units span residues 42-148 and 149-253. The next 4 membrane-spanning stretches (helical) occupy residues 86–106, 120–140, 184–204, and 219–239; these read VAML…KGIL, AEPL…GALG, LFVG…EIIT, and PINE…FAAI.

It belongs to the ELIP/psbS family.

The protein resides in the plastid. The protein localises to the chloroplast thylakoid membrane. In terms of biological role, involved in high light-mediated energy-dependent nonphotochemical quenching (NPQ, qE) and thermal dissipation (TD) thus regulating energy conversion in photosystem II and protecting from photoinhibition. Also seems to regulate quantum yield of electron transport in fluctuating light conditions. The chain is Photosystem II 22 kDa protein 2, chloroplastic from Oryza sativa subsp. indica (Rice).